We begin with the raw amino-acid sequence, 164 residues long: Lipoprotein signal peptidase (164 aa).

The next 4 membrane-spanning stretches (helical) occupy residues 6–26, 39–59, 65–85, and 88–108; these read LGVL…LWLL, VLPF…GWFS, GQIL…IWMA, and TTKL…GNAI. Active-site residues include Asp-118 and Asp-140. Residues 141 to 161 traverse the membrane as a helical segment; sequence VAIVVGVAALLYDSLIGLPAA.

The protein belongs to the peptidase A8 family.

It is found in the cell inner membrane. The catalysed reaction is Release of signal peptides from bacterial membrane prolipoproteins. Hydrolyzes -Xaa-Yaa-Zaa-|-(S,diacylglyceryl)Cys-, in which Xaa is hydrophobic (preferably Leu), and Yaa (Ala or Ser) and Zaa (Gly or Ala) have small, neutral side chains.. It functions in the pathway protein modification; lipoprotein biosynthesis (signal peptide cleavage). In terms of biological role, this protein specifically catalyzes the removal of signal peptides from prolipoproteins. In Rhodopseudomonas palustris (strain ATCC BAA-98 / CGA009), this protein is Lipoprotein signal peptidase.